Here is a 260-residue protein sequence, read N- to C-terminus: Taurine import ATP-binding protein TauB (260 aa).

The ABC transporter domain occupies 6–235 (AQQVSVVYAS…RYAHGEPVRS (230 aa)). ATP is bound at residue 40-47 (GASGCGKS).

The protein belongs to the ABC transporter superfamily. Taurine importer (TC 3.A.1.17.1) family. The complex is composed of two ATP-binding proteins (TauB), two transmembrane proteins (TauC) and a solute-binding protein (TauA).

Its subcellular location is the cell inner membrane. It carries out the reaction taurine(out) + ATP + H2O = taurine(in) + ADP + phosphate + H(+). In terms of biological role, part of the ABC transporter complex TauABC involved in taurine import. Responsible for energy coupling to the transport system. The polypeptide is Taurine import ATP-binding protein TauB (Burkholderia pseudomallei (strain K96243)).